We begin with the raw amino-acid sequence, 148 residues long: Wheatwin-2 (148 aa).

Residues 1-23 form the signal peptide; the sequence is MTMAARLMLVAALLCAAAAAATA. Position 24 is a pyrrolidone carboxylic acid (Q24). One can recognise a Barwin domain in the interval 24 to 148; that stretch reads QQATNVRATY…VNYQFVDCRD (125 aa). Disulfide bonds link C54–C86, C75–C109, and C89–C146.

As to quaternary structure, monomer.

In terms of biological role, shows antifungal activity towards B.cinerea and towards the wheat-specific pathogenic fungi F.culmorum and F.graminearum (groups 1 and 2). This Triticum aestivum (Wheat) protein is Wheatwin-2 (PR4B).